The sequence spans 390 residues: Stearoyl-[acyl-carrier-protein] 9-desaturase 5, chloroplastic (390 aa).

A disordered region spans residues 1-22 (MAFAASHTASPSSCGGVAQRRS). The N-terminal 31 residues, 1–31 (MAFAASHTASPSSCGGVAQRRSNGMSPVVAM), are a transit peptide targeting the chloroplast. Fe cation is bound by residues Glu132, Glu170, His173, Glu223, Glu256, and His259.

This sequence belongs to the fatty acid desaturase type 2 family. Homodimer. Fe(2+) serves as cofactor.

Its subcellular location is the plastid. It is found in the chloroplast. It carries out the reaction octadecanoyl-[ACP] + 2 reduced [2Fe-2S]-[ferredoxin] + O2 + 2 H(+) = (9Z)-octadecenoyl-[ACP] + 2 oxidized [2Fe-2S]-[ferredoxin] + 2 H2O. It functions in the pathway lipid metabolism; fatty acid metabolism. Functionally, converts stearoyl-ACP to oleoyl-ACP by introduction of a cis double bond between carbons 9 and 10 of the acyl chain. The polypeptide is Stearoyl-[acyl-carrier-protein] 9-desaturase 5, chloroplastic (Oryza sativa subsp. japonica (Rice)).